Consider the following 599-residue polypeptide: MEQYEVLEQIGKGAFGSALLVRHKVEKKKYVLKKIRLARQTDRTRRSAHQEMQLIATVRNPFIVEYKDSWVEKGCYVCIIIGYCEGGDMAEAIKRATGDHFSEEKLCKWLVQLLMALDYLHANHILHRDVKCSNIFLTRDQSIRLGDFGLAKILTSDDLASSVVGTPSYMCPELLADIPYGTKSDIWSLGCCIYEMTALRPAFKAFDMQALISKITKSIVSPLPTRYSGAFRGLIKSMLRKSPEHRPSAAELLKHPHLQPYVLQVHLKSSPARNIIPSHQSPIDKVKKMTFPTESMCRSKGRRNSLGNERIVTFSKPSPERKFTSSIQSIKDYSTTRSVKDLSIDVSLVEEVSSKTTFTTRTSSIVKTPKRTPSKTITTPQLEPPKVSYNRVNRSELLSRTPVNRSARVIRRASLPLPLPSSETPKRGVSSISILEQLESPDVSVNSPRIDRIAEFPLASSEDPPFLKLHGRRSPTPTPQHCVIDQSITKDKCMVEAFHIIDVDDDDGRSDSSSGRNNAAAAASSRAGSSESTRQRRFDTSSYQQRAEALEGLLEFSAQLLQQERYDELGVLLKPFGPEKVSPRETAIWLTKSFKETGL.

One can recognise a Protein kinase domain in the interval 4 to 258; sequence YEVLEQIGKG…AAELLKHPHL (255 aa). ATP-binding positions include 10 to 18 and K33; that span reads IGKGAFGSA. The active-site Proton acceptor is D129. Disordered regions lie at residues 364 to 386, 461 to 482, and 504 to 542; these read SIVK…EPPK, SEDP…PQHC, and DDDD…DTSS. A compositionally biased stretch (low complexity) spans 511–530; that stretch reads DSSSGRNNAAAAASSRAGSS.

Belongs to the protein kinase superfamily. NEK Ser/Thr protein kinase family. NIMA subfamily. As to expression, expressed in anthers, pistils and leaves.

It catalyses the reaction L-seryl-[protein] + ATP = O-phospho-L-seryl-[protein] + ADP + H(+). The enzyme catalyses L-threonyl-[protein] + ATP = O-phospho-L-threonyl-[protein] + ADP + H(+). Its function is as follows. May be involved in plant development processes. In Oryza sativa subsp. japonica (Rice), this protein is Serine/threonine-protein kinase Nek1.